Consider the following 461-residue polypeptide: Nuclear distribution protein PAC1 (461 aa).

One can recognise a LisH domain in the interval 9–41 (QAEELHKAIIAYLSANNLSSSATALRTELGLAE). Residues 61–88 (TSVVRLQKKIMDLESRNNALQSELDNAT) adopt a coiled-coil conformation. WD repeat units follow at residues 114–155 (SHQN…RTIK), 157–197 (HTRP…KNIR), 201–248 (GHDH…CLKT), 251–290 (GHTA…PENR), 295–355 (GHDH…LKTL), 357–396 (GHDN…KCVK), 401–444 (VHER…VRIR), and 446–461 (VIAT…IFAN).

This sequence belongs to the WD repeat LIS1/nudF family. In terms of assembly, self-associates. Interacts with NDL1 and dynein.

It localises to the cytoplasm. The protein localises to the cytoskeleton. Its subcellular location is the spindle pole. Its function is as follows. Positively regulates the activity of the minus-end directed microtubule motor protein dynein. May enhance dynein-mediated microtubule sliding by targeting dynein to the microtubule plus end. Required for nuclear migration during vegetative growth as well as development. Required for retrograde early endosome (EE) transport from the hyphal tip. Required for localization of dynein to the mitotic spindle poles. Recruits additional proteins to the dynein complex at SPBs. The sequence is that of Nuclear distribution protein PAC1 from Pyricularia oryzae (strain 70-15 / ATCC MYA-4617 / FGSC 8958) (Rice blast fungus).